We begin with the raw amino-acid sequence, 117 residues long: Iron-sulfur cluster insertion protein ErpA (117 aa).

3 residues coordinate iron-sulfur cluster: Cys-45, Cys-109, and Cys-111.

The protein belongs to the HesB/IscA family. In terms of assembly, homodimer. Iron-sulfur cluster serves as cofactor.

Functionally, required for insertion of 4Fe-4S clusters for at least IspG. The polypeptide is Iron-sulfur cluster insertion protein ErpA (Saccharophagus degradans (strain 2-40 / ATCC 43961 / DSM 17024)).